The primary structure comprises 206 residues: Pyridoxine/pyridoxamine 5'-phosphate oxidase (206 aa).

FMN-binding positions include 53–58, 68–69, Lys-75, and Gln-97; these read RMVLLK and YT. A substrate-binding site is contributed by Lys-58. 3 residues coordinate substrate: Tyr-115, Arg-119, and Ser-123. FMN is bound by residues 132 to 133 and Trp-177; that span reads QS. 183-185 contacts substrate; the sequence is RLH. Arg-187 is an FMN binding site.

Belongs to the pyridoxamine 5'-phosphate oxidase family. In terms of assembly, homodimer. FMN serves as cofactor.

It catalyses the reaction pyridoxamine 5'-phosphate + O2 + H2O = pyridoxal 5'-phosphate + H2O2 + NH4(+). The catalysed reaction is pyridoxine 5'-phosphate + O2 = pyridoxal 5'-phosphate + H2O2. The protein operates within cofactor metabolism; pyridoxal 5'-phosphate salvage; pyridoxal 5'-phosphate from pyridoxamine 5'-phosphate: step 1/1. It functions in the pathway cofactor metabolism; pyridoxal 5'-phosphate salvage; pyridoxal 5'-phosphate from pyridoxine 5'-phosphate: step 1/1. Catalyzes the oxidation of either pyridoxine 5'-phosphate (PNP) or pyridoxamine 5'-phosphate (PMP) into pyridoxal 5'-phosphate (PLP). This chain is Pyridoxine/pyridoxamine 5'-phosphate oxidase, found in Sinorhizobium fredii (strain NBRC 101917 / NGR234).